Reading from the N-terminus, the 621-residue chain is MEFPGGNDNYLTITGPSHPFLSGAETFHTPSLGDEEFEIPPISLDSDPSLAVSDVVGHFDDLADPSSSQDGSFSAQYGVQTLDMPVGMTHGLMEQGGGLLSGGLTMDLDHSIGTQYSANPPVTIDVPMTDMTSGLMGHSQLTTIDQSELSSQLGLSLGGGTILPPAQSPEDRLSTTPSPTSSLHEDGVEDFRRQLPSQKTVVVEAGKKQKAPKKRKKKDPNEPQKPVSAYALFFRDTQAAIKGQNPNATFGEVSKIVASMWDSLGEEQKQVYKRKTEAAKKEYLKALAAYKDNQECQATVETVELDPAPPSQTPSPPPMATVDPASPAPASIEPPALSPSIVVNSTLSSYVANQASSGAGGQPNITKLIITKQMLPSSITMSQGGMVTVIPATVVTSRGLQLGQTSTATIQPSQQAQIVTRSVLQAAAAAAAAASMQLPPPRLQPPPLQQMPQPPTQQQVTILQQPPPLQAMQQPPPQKVRINLQQQPPPLQIKSVPLPTLKMQTTLVPPTVESSPERPMNNSPEAHTVEAPSPETICEMITDVVPEVESPSQMDVELVSGSPVALSPQPRCVRSGCENPPIVSKDWDNEYCSNECVVKHCRDVFLAWVASRNSNTVVFVK.

Disordered regions lie at residues 153–227 and 305–333; these read LGLS…QKPV and LDPAPPSQTPSPPPMATVDPASPAPASIE. Position 176 is a phosphothreonine (Thr176). Phosphoserine is present on residues Ser178, Ser181, and Ser182. The segment covering 183–193 has biased composition (basic and acidic residues); that stretch reads LHEDGVEDFRR. The segment covering 208–218 has biased composition (basic residues); that stretch reads KQKAPKKRKKK. The short motif at 213 to 218 is the Nuclear localization signal element; that stretch reads KKRKKK. The segment at residues 223-291 is a DNA-binding region (HMG box); the sequence is PQKPVSAYAL…EYLKALAAYK (69 aa). Residues 307 to 319 are compositionally biased toward pro residues; sequence PAPPSQTPSPPPM. The residue at position 313 (Thr313) is a Phosphothreonine. Ser315 bears the Phosphoserine mark. Residues 320–333 show a composition bias toward low complexity; sequence ATVDPASPAPASIE. The residue at position 481 (Arg481) is an Asymmetric dimethylarginine. Polar residues predominate over residues 510–525; that stretch reads PTVESSPERPMNNSPE. The disordered stretch occupies residues 510–529; the sequence is PTVESSPERPMNNSPEAHTV. A phosphoserine mark is found at Ser533, Ser550, Ser552, Ser560, Ser562, and Ser567.

As to quaternary structure, component of the PNUTS-PP1 phosphatase complex, composed of PPP1R10/PNUTS, TOX4, WDR82 and PPP1CA or PPP1CB or PPP1CC. Interacts with PPP1R10/PNUTS. Interacts with FOXO1 and CREB1 (increased by cAMP); FOXO1 and CREB1 are required for full induction of TOX4-dependent activity and the interactions are inhibited by insulin. As to expression, expressed in liver (at protein level).

It is found in the nucleus. The protein resides in the chromosome. With respect to regulation, in liver, recruited to target gene promoters following treatment with dexamethasone and cAMP. Binding is decreased in presence of insulin. In terms of biological role, transcription factor that modulates cell fate reprogramming from the somatic state to the pluripotent and neuronal fate. In liver, controls the expression of hormone-regulated gluconeogenic genes such as G6PC1 and PCK1. This regulation is independent of the insulin receptor activation. Also acts as a regulatory component of protein phosphatase 1 (PP1) complexes. Component of the PNUTS-PP1 protein phosphatase complex, a PP1 complex that regulates RNA polymerase II transcription pause-release. PNUTS-PP1 also plays a role in the control of chromatin structure and cell cycle progression during the transition from mitosis into interphase. The polypeptide is TOX high mobility group box family member 4 (Homo sapiens (Human)).